Consider the following 604-residue polypeptide: Acetylcholinesterase 4 (604 aa).

A signal peptide spans 1–23; it reads MKPKLVFLPFLIFITVFIEESEA. A disulfide bridge links Cys-88 with Cys-115. N-linked (GlcNAc...) asparagine glycans are attached at residues Asn-96 and Asn-128. Residue Ser-219 is the Acyl-ester intermediate of the active site. An intrachain disulfide couples Cys-273 to Cys-284. N-linked (GlcNAc...) asparagine glycans are attached at residues Asn-274 and Asn-299. Glu-347 (charge relay system) is an active-site residue. Asn-400 and Asn-446 each carry an N-linked (GlcNAc...) asparagine glycan. Cys-426 and Cys-561 form a disulfide bridge. The active-site Charge relay system is the His-477.

This sequence belongs to the type-B carboxylesterase/lipase family.

It localises to the synapse. The protein resides in the secreted. Its subcellular location is the cell membrane. The catalysed reaction is acetylcholine + H2O = choline + acetate + H(+). In terms of biological role, rapidly hydrolyzes choline released into the synapse. The protein is Acetylcholinesterase 4 (ace-4) of Caenorhabditis briggsae.